Reading from the N-terminus, the 361-residue chain is Phosphoserine aminotransferase (361 aa).

Arg-42 is a binding site for L-glutamate. Pyridoxal 5'-phosphate-binding positions include 76–77 (AT), Trp-102, Thr-152, Asp-172, and Gln-195. Lys-196 is subject to N6-(pyridoxal phosphate)lysine. A pyridoxal 5'-phosphate-binding site is contributed by 237 to 238 (NT).

This sequence belongs to the class-V pyridoxal-phosphate-dependent aminotransferase family. SerC subfamily. Homodimer. It depends on pyridoxal 5'-phosphate as a cofactor.

It localises to the cytoplasm. It carries out the reaction O-phospho-L-serine + 2-oxoglutarate = 3-phosphooxypyruvate + L-glutamate. The enzyme catalyses 4-(phosphooxy)-L-threonine + 2-oxoglutarate = (R)-3-hydroxy-2-oxo-4-phosphooxybutanoate + L-glutamate. It participates in amino-acid biosynthesis; L-serine biosynthesis; L-serine from 3-phospho-D-glycerate: step 2/3. Its pathway is cofactor biosynthesis; pyridoxine 5'-phosphate biosynthesis; pyridoxine 5'-phosphate from D-erythrose 4-phosphate: step 3/5. In terms of biological role, catalyzes the reversible conversion of 3-phosphohydroxypyruvate to phosphoserine and of 3-hydroxy-2-oxo-4-phosphonooxybutanoate to phosphohydroxythreonine. The protein is Phosphoserine aminotransferase of Stenotrophomonas maltophilia (strain R551-3).